The primary structure comprises 763 residues: Phosphoglycerol transferase I (763 aa).

4 helical membrane passes run 1 to 21 (MSELLSFALFLASVLIYAWKA), 26 to 46 (WWFAATLTVLGLFVVLNITLF), 77 to 97 (ILPGIGIVLGLTAVFGALGWI), and 108 to 128 (FGYSLLALLLALGSVDASPAF).

Belongs to the OpgB family.

The protein localises to the cell inner membrane. The catalysed reaction is a phosphatidylglycerol + a membrane-derived-oligosaccharide D-glucose = a 1,2-diacyl-sn-glycerol + a membrane-derived-oligosaccharide 6-(glycerophospho)-D-glucose.. It functions in the pathway glycan metabolism; osmoregulated periplasmic glucan (OPG) biosynthesis. Transfers a phosphoglycerol residue from phosphatidylglycerol to the membrane-bound nascent glucan backbones. This Escherichia coli O17:K52:H18 (strain UMN026 / ExPEC) protein is Phosphoglycerol transferase I.